We begin with the raw amino-acid sequence, 424 residues long: Histidinol dehydrogenase homolog (424 aa).

Gln-250 and His-253 together coordinate Zn(2+). Active-site proton acceptor residues include Glu-318 and His-319. Residues Asp-352 and His-411 each contribute to the Zn(2+) site.

Belongs to the histidinol dehydrogenase family. Zn(2+) serves as cofactor.

This is Histidinol dehydrogenase homolog from Shouchella clausii (strain KSM-K16) (Alkalihalobacillus clausii).